The sequence spans 153 residues: 6,7-dimethyl-8-ribityllumazine synthase (153 aa).

5-amino-6-(D-ribitylamino)uracil is bound by residues Phe21, 55–57, and 79–81; these read AFE and TVI. 84 to 85 serves as a coordination point for (2S)-2-hydroxy-3-oxobutyl phosphate; the sequence is AT. The active-site Proton donor is the His87. Position 112 (Phe112) interacts with 5-amino-6-(D-ribitylamino)uracil. A (2S)-2-hydroxy-3-oxobutyl phosphate-binding site is contributed by Arg126.

This sequence belongs to the DMRL synthase family. As to quaternary structure, forms an icosahedral capsid composed of 60 subunits, arranged as a dodecamer of pentamers.

The catalysed reaction is (2S)-2-hydroxy-3-oxobutyl phosphate + 5-amino-6-(D-ribitylamino)uracil = 6,7-dimethyl-8-(1-D-ribityl)lumazine + phosphate + 2 H2O + H(+). Its pathway is cofactor biosynthesis; riboflavin biosynthesis; riboflavin from 2-hydroxy-3-oxobutyl phosphate and 5-amino-6-(D-ribitylamino)uracil: step 1/2. Functionally, catalyzes the formation of 6,7-dimethyl-8-ribityllumazine by condensation of 5-amino-6-(D-ribitylamino)uracil with 3,4-dihydroxy-2-butanone 4-phosphate. This is the penultimate step in the biosynthesis of riboflavin. In Bacillus cereus (strain G9842), this protein is 6,7-dimethyl-8-ribityllumazine synthase.